The following is a 711-amino-acid chain: Early transcription factor 82 kDa subunit (711 aa).

It belongs to the poxviridae VETF large subunit family. Heterodimer of a 70 kDa and a 82 kDa subunit. Part of the early transcription complex composed of ETF, RAP94, and the DNA-directed RNA polymerase.

Acts with RNA polymerase to initiate transcription from early gene promoters. Is recruited by the RPO-associated protein of 94 kDa (RAP94) to form the early transcription complex, which also contains the core RNA polymerase. ETF heterodimer binds to early gene promoters. This chain is Early transcription factor 82 kDa subunit (VETFL), found in Oryctolagus cuniculus (Rabbit).